Consider the following 188-residue polypeptide: Interferon alpha-2 (188 aa).

Positions 1–23 (MALTFALLVALLVLSCKSSCSVG) are cleaved as a signal peptide. Disulfide bonds link Cys-24-Cys-121 and Cys-52-Cys-161. Residue Thr-129 is glycosylated (O-linked (GalNAc...) threonine).

This sequence belongs to the alpha/beta interferon family. In terms of assembly, interacts with IFNAR2.

Its subcellular location is the secreted. Produced by macrophages, IFN-alpha have antiviral activities. The polypeptide is Interferon alpha-2 (IFNA2) (Homo sapiens (Human)).